The following is a 493-amino-acid chain: Glutamate--tRNA ligase (493 aa).

A 'HIGH' region motif is present at residues 10-20; the sequence is PSPTGFVHIGS. Positions 114, 116, 141, and 143 each coordinate Zn(2+). The 'KMSKS' region motif lies at 258–262; sequence KLSKR. Lys261 lines the ATP pocket.

This sequence belongs to the class-I aminoacyl-tRNA synthetase family. Glutamate--tRNA ligase type 1 subfamily. In terms of assembly, monomer. Requires Zn(2+) as cofactor.

It localises to the cytoplasm. It carries out the reaction tRNA(Glu) + L-glutamate + ATP = L-glutamyl-tRNA(Glu) + AMP + diphosphate. Its function is as follows. Catalyzes the attachment of glutamate to tRNA(Glu) in a two-step reaction: glutamate is first activated by ATP to form Glu-AMP and then transferred to the acceptor end of tRNA(Glu). In Alkaliphilus metalliredigens (strain QYMF), this protein is Glutamate--tRNA ligase.